A 104-amino-acid chain; its full sequence is Large ribosomal subunit protein bL21 (104 aa).

Belongs to the bacterial ribosomal protein bL21 family. As to quaternary structure, part of the 50S ribosomal subunit. Contacts protein L20.

In terms of biological role, this protein binds to 23S rRNA in the presence of protein L20. In Kosmotoga olearia (strain ATCC BAA-1733 / DSM 21960 / TBF 19.5.1), this protein is Large ribosomal subunit protein bL21.